Consider the following 573-residue polypeptide: PCNA-interacting partner (573 aa).

The tract at residues 463 to 511 is disordered; it reads VSEGAQPSVGKARLETSSENVHVDRSKDDKGPRKSTKRKLAKSKQPGVR. Basic and acidic residues predominate over residues 474-494; it reads ARLETSSENVHVDRSKDDKGP. Basic residues predominate over residues 495 to 504; sequence RKSTKRKLAK.

It belongs to the PARI family. Interacts with RAD51 and PCNA. Interacts with PARP1. Interacts with TASOR. Present in testis (at protein level). Expressed in testis, gastrointestinal tract (jejunum, ileum, and colon) and immune system (thymus and spleen). Weakly expressed in lung, kidney, pituitary gland and muscle.

The protein localises to the cytoplasm. The protein resides in the nucleus. Required to suppress inappropriate homologous recombination, thereby playing a central role DNA repair and in the maintenance of genomic stability. Antagonizes homologous recombination by interfering with the formation of the RAD51-DNA homologous recombination structure. Positively regulate the poly(ADP-ribosyl)ation activity of PARP1; however such function may be indirect. Binds single-strand DNA and poly(A) homopolymers. In Rattus norvegicus (Rat), this protein is PCNA-interacting partner (Parpbp).